Here is a 227-residue protein sequence, read N- to C-terminus: UPF0758 protein SSA_1218 (227 aa).

In terms of domain architecture, MPN spans Q104 to M226. Zn(2+)-binding residues include H175, H177, and D188. Residues H175–D188 carry the JAMM motif motif.

It belongs to the UPF0758 family.

In Streptococcus sanguinis (strain SK36), this protein is UPF0758 protein SSA_1218.